Here is a 232-residue protein sequence, read N- to C-terminus: Ubiquinone biosynthesis O-methyltransferase (232 aa).

The S-adenosyl-L-methionine site is built by Arg-36, Gly-55, Asp-76, and Met-120.

Belongs to the methyltransferase superfamily. UbiG/COQ3 family.

It catalyses the reaction a 3-demethylubiquinol + S-adenosyl-L-methionine = a ubiquinol + S-adenosyl-L-homocysteine + H(+). The catalysed reaction is a 3-(all-trans-polyprenyl)benzene-1,2-diol + S-adenosyl-L-methionine = a 2-methoxy-6-(all-trans-polyprenyl)phenol + S-adenosyl-L-homocysteine + H(+). It participates in cofactor biosynthesis; ubiquinone biosynthesis. Its function is as follows. O-methyltransferase that catalyzes the 2 O-methylation steps in the ubiquinone biosynthetic pathway. In Burkholderia multivorans (strain ATCC 17616 / 249), this protein is Ubiquinone biosynthesis O-methyltransferase.